A 346-amino-acid polypeptide reads, in one-letter code: Phenylalanine--tRNA ligase alpha subunit (346 aa).

Glutamate 261 contacts Mg(2+).

This sequence belongs to the class-II aminoacyl-tRNA synthetase family. Phe-tRNA synthetase alpha subunit type 1 subfamily. As to quaternary structure, tetramer of two alpha and two beta subunits. The cofactor is Mg(2+).

It is found in the cytoplasm. The catalysed reaction is tRNA(Phe) + L-phenylalanine + ATP = L-phenylalanyl-tRNA(Phe) + AMP + diphosphate + H(+). In Streptococcus agalactiae serotype III (strain NEM316), this protein is Phenylalanine--tRNA ligase alpha subunit.